The following is a 434-amino-acid chain: MYDRLKGFRDFYPPEMTARRQVIDILETTATQYGFREVGTPTLEQTQMYVDKSGEGIEEELYAFSDDGGRDVTLIPELTPTVARMVVDKQQALSKPIKWVSTRPFWRYEQVQQGRFREFYQTNVDIFGTADPIADAEILAFAADALRNLGLTASDFEFRVSHRDILSGLLASITNDDADIDTRAAIRAVDKRAKIEQAEYHGLLTDAGLSYDQAQSFDDLLTTADLDEIATVGNDIVTTAVQNLRSVLAAVDDLGVGEFCDISLTTARGLDYYTGVVFECFDATGEVSRSVFGGGRYDNLIESFGGQPTPAVGVAPGLAPLSLLCQRAGVWPTEELTTDYYILTVGDTRSVATRIARELRVNKNTVEIDIADRSFGAQMGYADSINAETVIIVGERDLENDEITIKDMNSGDQTTVPVEAFPGDHDAPTYEDVV.

Positions 412–434 (DQTTVPVEAFPGDHDAPTYEDVV) are disordered.

This sequence belongs to the class-II aminoacyl-tRNA synthetase family.

The protein localises to the cytoplasm. It carries out the reaction tRNA(His) + L-histidine + ATP = L-histidyl-tRNA(His) + AMP + diphosphate + H(+). The polypeptide is Histidine--tRNA ligase (Haloquadratum walsbyi (strain DSM 16790 / HBSQ001)).